Here is a 720-residue protein sequence, read N- to C-terminus: GTPase-activating protein gyp2 (720 aa).

Positions 20–85 constitute a GRAM domain; it reads LDPASFFRIN…AAVRKLEREN (66 aa). The 189-residue stretch at 216–404 folds into the Rab-GAP TBC domain; it reads GIPNNLRADI…RILDCLFVNG (189 aa).

It is found in the cytoplasm. The protein resides in the nucleus. Its function is as follows. Stimulates specifically the GTPase activity of ypt2 and ryh1. Inactivates ryh1 during recycling between the endosome and the Golgi compartments. This Schizosaccharomyces pombe (strain 972 / ATCC 24843) (Fission yeast) protein is GTPase-activating protein gyp2.